A 421-amino-acid polypeptide reads, in one-letter code: Histidine--tRNA ligase (421 aa).

This sequence belongs to the class-II aminoacyl-tRNA synthetase family. As to quaternary structure, homodimer.

Its subcellular location is the cytoplasm. The enzyme catalyses tRNA(His) + L-histidine + ATP = L-histidyl-tRNA(His) + AMP + diphosphate + H(+). This chain is Histidine--tRNA ligase, found in Francisella tularensis subsp. novicida (strain U112).